Consider the following 2542-residue polypeptide: Highly reducing polyketide synthase (2542 aa).

Residues 7–435 form the Ketosynthase family 3 (KS3) domain; the sequence is PEPIAIVGMA…GANAHAILDA (429 aa). Active-site for beta-ketoacyl synthase activity residues include Cys-182, His-317, and His-357. Residues 545-872 form the Malonyl-CoA:ACP transacylase (MAT) domain; it reads FVFTGQGAQW…NLVGSLFLSG (328 aa). Residues 927-1062 are N-terminal hotdog fold; it reads HDLLGSRIPG…TTNETLRINS (136 aa). In terms of domain architecture, PKS/mFAS DH spans 927-1224; sequence HDLLGSRIPG…FLSLETATKE (298 aa). His-959 serves as the catalytic Proton acceptor; for dehydratase activity. The interval 1072 to 1224 is C-terminal hotdog fold; the sequence is NKDSYVRRWY…FLSLETATKE (153 aa). Residue Asp-1137 is the Proton donor; for dehydratase activity of the active site. The interval 1275-1574 is methyltransferase (CMet) domain; sequence LTQLAIRSVV…AGADIMLDDY (300 aa). The tract at residues 1606–1634 is disordered; the sequence is VNGTNGINSTNSVNVTNDTSGINDTNRMN. One can recognise an Enoyl reductase (ER) domain in the interval 1866–2186; sequence GKANSFYFES…QGDSVGSVVL (321 aa). The Ketoreductase (KR) domain maps to 2209-2389; sequence ASYLLVGCLG…QAMSMALGMI (181 aa).

The cofactor is pantetheine 4'-phosphate.

The protein operates within antifungal biosynthesis. In terms of biological role, highly reducing polyketide synthase; part of the gene cluster that mediates the biosynthesis of the tetrahydropyranyl antifungal agent lanomycin that acts as an inhibitor of CYP51 and blocks the ergosterol biosynthesis. The biosynthesis probably begins with the formation of an hexaketide, followed by methionine mediated alkylation of C-2 and C-6, and methylation of the reduced C-3 oxygen, pyran forming reductive ring closure, oxygenation of C-4, beta-keto reduction, enoyl reduction and dehydration of the remaining oxygens, and finally, acylation with glycine to complete the biosynthesis. This is Highly reducing polyketide synthase from Pyrenophora dematioidea (Helminthosporium dematioideum).